The sequence spans 251 residues: Pyrroloquinoline-quinone synthase (251 aa).

The protein belongs to the PqqC family.

The enzyme catalyses 6-(2-amino-2-carboxyethyl)-7,8-dioxo-1,2,3,4,7,8-hexahydroquinoline-2,4-dicarboxylate + 3 O2 = pyrroloquinoline quinone + 2 H2O2 + 2 H2O + H(+). It participates in cofactor biosynthesis; pyrroloquinoline quinone biosynthesis. Its function is as follows. Ring cyclization and eight-electron oxidation of 3a-(2-amino-2-carboxyethyl)-4,5-dioxo-4,5,6,7,8,9-hexahydroquinoline-7,9-dicarboxylic-acid to PQQ. The protein is Pyrroloquinoline-quinone synthase of Pseudomonas entomophila (strain L48).